We begin with the raw amino-acid sequence, 254 residues long: Diphthine synthase (254 aa).

S-adenosyl-L-methionine-binding positions include L11, D87, I90, 115–116 (SV), L167, L208, and H233.

It belongs to the diphthine synthase family. As to quaternary structure, homodimer.

It carries out the reaction 2-[(3S)-amino-3-carboxypropyl]-L-histidyl-[translation elongation factor 2] + 3 S-adenosyl-L-methionine = diphthine-[translation elongation factor 2] + 3 S-adenosyl-L-homocysteine + 3 H(+). It participates in protein modification; peptidyl-diphthamide biosynthesis. Functionally, S-adenosyl-L-methionine-dependent methyltransferase that catalyzes the trimethylation of the amino group of the modified target histidine residue in translation elongation factor 2 (EF-2), to form an intermediate called diphthine. The three successive methylation reactions represent the second step of diphthamide biosynthesis. This Metallosphaera sedula (strain ATCC 51363 / DSM 5348 / JCM 9185 / NBRC 15509 / TH2) protein is Diphthine synthase.